The following is a 565-amino-acid chain: Sulfite reductase [NADPH] hemoprotein beta-component (565 aa).

[4Fe-4S] cluster-binding residues include Cys429, Cys435, Cys474, and Cys478. Cys478 provides a ligand contact to siroheme.

This sequence belongs to the nitrite and sulfite reductase 4Fe-4S domain family. As to quaternary structure, alpha(8)-beta(8). The alpha component is a flavoprotein, the beta component is a hemoprotein. It depends on siroheme as a cofactor. [4Fe-4S] cluster serves as cofactor.

The enzyme catalyses hydrogen sulfide + 3 NADP(+) + 3 H2O = sulfite + 3 NADPH + 4 H(+). It functions in the pathway sulfur metabolism; hydrogen sulfide biosynthesis; hydrogen sulfide from sulfite (NADPH route): step 1/1. Its function is as follows. Component of the sulfite reductase complex that catalyzes the 6-electron reduction of sulfite to sulfide. This is one of several activities required for the biosynthesis of L-cysteine from sulfate. The sequence is that of Sulfite reductase [NADPH] hemoprotein beta-component from Pseudoalteromonas translucida (strain TAC 125).